Here is a 498-residue protein sequence, read N- to C-terminus: Fascin-3 (498 aa).

The protein belongs to the fascin family. As to expression, expressed in testis.

It is found in the cytoplasm. Its subcellular location is the cytoskeleton. Acts as an actin bundling protein. The chain is Fascin-3 (Fscn3) from Mus musculus (Mouse).